A 57-amino-acid polypeptide reads, in one-letter code: Ribosome modulation factor (57 aa).

A disordered region spans residues 1–28 (MKRQKRDRLERAQSQGYKAGLNGRSHDE).

Belongs to the ribosome modulation factor family.

It localises to the cytoplasm. In terms of biological role, during stationary phase, converts 70S ribosomes to an inactive dimeric form (100S ribosomes). In Vibrio cholerae serotype O1 (strain MJ-1236), this protein is Ribosome modulation factor.